A 239-amino-acid polypeptide reads, in one-letter code: LexA repressor (239 aa).

Positions 27–47 (FDEMKDALDLASKSGIHRLIT) form a DNA-binding region, H-T-H motif. Active-site for autocatalytic cleavage activity residues include serine 159 and lysine 197.

This sequence belongs to the peptidase S24 family. Homodimer.

It carries out the reaction Hydrolysis of Ala-|-Gly bond in repressor LexA.. Represses a number of genes involved in the response to DNA damage (SOS response), including recA and lexA. In the presence of single-stranded DNA, RecA interacts with LexA causing an autocatalytic cleavage which disrupts the DNA-binding part of LexA, leading to derepression of the SOS regulon and eventually DNA repair. This Rhizobium radiobacter (Agrobacterium tumefaciens) protein is LexA repressor.